The chain runs to 379 residues: Protein RecA (379 aa).

Residues 1 to 24 are disordered; it reads MSVDVKSAQSSKSDSLQAEPRPGE. Residues 7-16 show a composition bias toward polar residues; sequence SAQSSKSDSL. 84-91 is a binding site for ATP; that stretch reads GPESSGKT.

It belongs to the RecA family.

It localises to the cytoplasm. Functionally, can catalyze the hydrolysis of ATP in the presence of single-stranded DNA, the ATP-dependent uptake of single-stranded DNA by duplex DNA, and the ATP-dependent hybridization of homologous single-stranded DNAs. It interacts with LexA causing its activation and leading to its autocatalytic cleavage. This chain is Protein RecA, found in Prochlorococcus marinus (strain MIT 9303).